An 83-amino-acid chain; its full sequence is Small ribosomal subunit protein uS17 (83 aa).

This sequence belongs to the universal ribosomal protein uS17 family. In terms of assembly, part of the 30S ribosomal subunit.

Functionally, one of the primary rRNA binding proteins, it binds specifically to the 5'-end of 16S ribosomal RNA. This chain is Small ribosomal subunit protein uS17, found in Aliarcobacter butzleri (strain RM4018) (Arcobacter butzleri).